Consider the following 186-residue polypeptide: Ribosome-recycling factor (186 aa).

This sequence belongs to the RRF family.

The protein resides in the cytoplasm. Responsible for the release of ribosomes from messenger RNA at the termination of protein biosynthesis. May increase the efficiency of translation by recycling ribosomes from one round of translation to another. The chain is Ribosome-recycling factor from Rickettsia massiliae (strain Mtu5).